Here is a 298-residue protein sequence, read N- to C-terminus: MTDSHYIGRFAPSPSGELHFGSLIAALGSYLQARAQRGIWRVRIEDIDPPREVPGAAATILRQLEHYGLHWDGEVLWQSQRHEAYCEALAWLHEQGLSYYCTCPRSRIQRLGGIYDGHCRTLCHGPENAAVRIKQQHPVMHFHDALRGDIQADPQLASEDFIIHRRDGLFAYNLAVVVDDHFQGVTEIVRGADLIEPTVRQLSLYKQFGWRAPGYVHLPLALNEQGAKLSKQNHAPALATGDPRPVLVQALRFLGQRDVVAWQEMSVEELLRFAVAHWRLTAVPTSANVNPAFSNASR.

L-glutamate-binding positions include 9–13 and E45; that span reads RFAPS. A 'HIGH' region motif is present at residues 12–22; that stretch reads PSPSGELHFGS. Residues C101, C103, Y115, and C119 each contribute to the Zn(2+) site. 2 residues coordinate L-glutamate: Y172 and R190. The 'KMSKS' region signature appears at 228-232; that stretch reads KLSKQ. Residue K231 coordinates ATP.

This sequence belongs to the class-I aminoacyl-tRNA synthetase family. GluQ subfamily. It depends on Zn(2+) as a cofactor.

Catalyzes the tRNA-independent activation of glutamate in presence of ATP and the subsequent transfer of glutamate onto a tRNA(Asp). Glutamate is transferred on the 2-amino-5-(4,5-dihydroxy-2-cyclopenten-1-yl) moiety of the queuosine in the wobble position of the QUC anticodon. This chain is Glutamyl-Q tRNA(Asp) synthetase, found in Salmonella choleraesuis (strain SC-B67).